We begin with the raw amino-acid sequence, 325 residues long: MLSAAPKPTPQNKKQSFYNKLWCMVCRIQDPDIIEDYAKGDLICRGCGVVVGDRIVDEHSEWRTFSNSESTGADPNRVGGPINPLLRDSALSTTVGKGSKDSGTLTRLQNKSALGTGDRNLLAAFKEIGRMADHMNLPQTVQDRANELFRFMDDKKSTKGRSVDGMVAAALYIACRQEHLSRTFKEIAALTNVPKKEISRCYKIMKETFASVLNLQTISSEDFTSRFCSTLKLPNDVKKGAEHVSKMAMDMGIVAGKSPISVTAASIYMVSQLSPEKRTQKQIADVSGVSEVTIRNAYKDLYAKRDQLIPSDSPYFSQVQYLPTN.

A TFIIB-type zinc finger spans residues 19-52; it reads NKLWCMVCRIQDPDIIEDYAKGDLICRGCGVVVG. Zn(2+)-binding residues include Cys23, Cys26, Cys44, and Cys47. Tandem repeats lie at residues 131–207 and 227–303.

Belongs to the TFIIB family.

The protein localises to the nucleus. In terms of biological role, general transcription factor that plays a role in transcription initiation by RNA polymerase II (Pol II). Involved in the pre-initiation complex (PIC) formation and Pol II recruitment at promoter DNA. The polypeptide is Transcription initiation factor IIB (gtf2b) (Dictyostelium discoideum (Social amoeba)).